The chain runs to 316 residues: tRNA dimethylallyltransferase (316 aa).

17–24 (GPTASGKT) contacts ATP. 19–24 (TASGKT) contributes to the substrate binding site. 4 interaction with substrate tRNA regions span residues 42-45 (DSAL), 166-170 (QRLSR), 247-252 (RCVGYR), and 280-287 (KRQITWLR).

It belongs to the IPP transferase family. As to quaternary structure, monomer. It depends on Mg(2+) as a cofactor.

The catalysed reaction is adenosine(37) in tRNA + dimethylallyl diphosphate = N(6)-dimethylallyladenosine(37) in tRNA + diphosphate. Functionally, catalyzes the transfer of a dimethylallyl group onto the adenine at position 37 in tRNAs that read codons beginning with uridine, leading to the formation of N6-(dimethylallyl)adenosine (i(6)A). The polypeptide is tRNA dimethylallyltransferase (Escherichia coli O45:K1 (strain S88 / ExPEC)).